A 423-amino-acid chain; its full sequence is Serine--tRNA ligase (423 aa).

Residue 231–233 (TAE) participates in L-serine binding. 262–264 (RSE) serves as a coordination point for ATP. An L-serine-binding site is contributed by Glu-285. ATP is bound at residue 349-352 (EIGS). Residue Ser-385 coordinates L-serine.

The protein belongs to the class-II aminoacyl-tRNA synthetase family. Type-1 seryl-tRNA synthetase subfamily. As to quaternary structure, homodimer. The tRNA molecule binds across the dimer.

It is found in the cytoplasm. The catalysed reaction is tRNA(Ser) + L-serine + ATP = L-seryl-tRNA(Ser) + AMP + diphosphate + H(+). It carries out the reaction tRNA(Sec) + L-serine + ATP = L-seryl-tRNA(Sec) + AMP + diphosphate + H(+). It participates in aminoacyl-tRNA biosynthesis; selenocysteinyl-tRNA(Sec) biosynthesis; L-seryl-tRNA(Sec) from L-serine and tRNA(Sec): step 1/1. Its function is as follows. Catalyzes the attachment of serine to tRNA(Ser). Is also able to aminoacylate tRNA(Sec) with serine, to form the misacylated tRNA L-seryl-tRNA(Sec), which will be further converted into selenocysteinyl-tRNA(Sec). This Acholeplasma laidlawii (strain PG-8A) protein is Serine--tRNA ligase.